A 372-amino-acid polypeptide reads, in one-letter code: Glutamate 5-kinase (372 aa).

Lysine 14 provides a ligand contact to ATP. Residues serine 54, aspartate 141, and asparagine 153 each coordinate substrate. Residues 173–174 (TD) and 215–221 (SGGMLTK) contribute to the ATP site. The 79-residue stretch at 280–358 (AGKVVVDEGA…HEIEHILGYI (79 aa)) folds into the PUA domain.

Belongs to the glutamate 5-kinase family.

The protein resides in the cytoplasm. It catalyses the reaction L-glutamate + ATP = L-glutamyl 5-phosphate + ADP. The protein operates within amino-acid biosynthesis; L-proline biosynthesis; L-glutamate 5-semialdehyde from L-glutamate: step 1/2. In terms of biological role, catalyzes the transfer of a phosphate group to glutamate to form L-glutamate 5-phosphate. This Methylobacillus flagellatus (strain ATCC 51484 / DSM 6875 / VKM B-1610 / KT) protein is Glutamate 5-kinase.